The sequence spans 62 residues: Conotoxin Tx5.1 (62 aa).

A signal peptide spans 1–22 (MCCLPVFVILLLLIASAPSVDA). The propeptide occupies 23-49 (QPKTKDDVPLAPLHDNAKSALQHLNQR). Position 60 is a glutamine amide (Gln-60).

Belongs to the conotoxin T superfamily. Post-translationally, contains 2 disulfide bonds that can be either 'C1-C3, C2-C4' or 'C1-C4, C2-C3', since these disulfide connectivities have been observed for conotoxins with cysteine framework V (for examples, see AC P0DQQ7 and AC P81755). In terms of tissue distribution, expressed by the venom duct.

The protein localises to the secreted. The polypeptide is Conotoxin Tx5.1 (Conus textile (Cloth-of-gold cone)).